We begin with the raw amino-acid sequence, 80 residues long: Small ribosomal subunit protein bS18 (80 aa).

Belongs to the bacterial ribosomal protein bS18 family. In terms of assembly, part of the 30S ribosomal subunit. Forms a tight heterodimer with protein bS6.

In terms of biological role, binds as a heterodimer with protein bS6 to the central domain of the 16S rRNA, where it helps stabilize the platform of the 30S subunit. In Clostridium perfringens (strain ATCC 13124 / DSM 756 / JCM 1290 / NCIMB 6125 / NCTC 8237 / Type A), this protein is Small ribosomal subunit protein bS18.